A 598-amino-acid chain; its full sequence is Arylsulfate sulfotransferase AssT (598 aa).

The signal sequence occupies residues 1-27; the sequence is MFDKYRKTLVAGTVAITLGLSASGVMA. Positions 279 and 383 each coordinate 4-methylumbelliferone. An intrachain disulfide couples cysteine 445 to cysteine 451. Histidine 463 provides a ligand contact to 4-methylumbelliferone. Residue histidine 463 is the Nucleophile; sulfurylated histidine covalent intermediate of the active site.

Belongs to the aryl sulfotransferase family. Homodimer. Post-translationally, the disulfide bond is crucial for enzyme activity.

The protein localises to the periplasm. It carries out the reaction an aryl sulfate + a phenol = an aryl sulfate + a phenol. The enzyme catalyses 4-methylumbelliferone sulfate + phenol = phenyl sulfate + 4-methylumbelliferone. Functionally, catalyzes the transfer of a sulfate group from a phenyl sulfate ester to other phenolic compounds. In vitro, is able to use 4-methylumbelliferyl sulfate and p-nitrophenyl sulfate (PNS) as donor substrates with phenol as the acceptor substrate. Cannot use 3'-phosphoadenosine-5'-phophosulfate (PAPS), the donor substrate of mammalian sulfotransferase. This Escherichia coli O6:H1 (strain CFT073 / ATCC 700928 / UPEC) protein is Arylsulfate sulfotransferase AssT.